Here is a 252-residue protein sequence, read N- to C-terminus: 2-succinyl-6-hydroxy-2,4-cyclohexadiene-1-carboxylate synthase (252 aa).

Belongs to the AB hydrolase superfamily. MenH family. As to quaternary structure, monomer.

The catalysed reaction is 5-enolpyruvoyl-6-hydroxy-2-succinyl-cyclohex-3-ene-1-carboxylate = (1R,6R)-6-hydroxy-2-succinyl-cyclohexa-2,4-diene-1-carboxylate + pyruvate. The protein operates within quinol/quinone metabolism; 1,4-dihydroxy-2-naphthoate biosynthesis; 1,4-dihydroxy-2-naphthoate from chorismate: step 3/7. It functions in the pathway quinol/quinone metabolism; menaquinone biosynthesis. In terms of biological role, catalyzes a proton abstraction reaction that results in 2,5-elimination of pyruvate from 2-succinyl-5-enolpyruvyl-6-hydroxy-3-cyclohexene-1-carboxylate (SEPHCHC) and the formation of 2-succinyl-6-hydroxy-2,4-cyclohexadiene-1-carboxylate (SHCHC). The chain is 2-succinyl-6-hydroxy-2,4-cyclohexadiene-1-carboxylate synthase from Salmonella paratyphi A (strain ATCC 9150 / SARB42).